The chain runs to 87 residues: UPF0237 protein YjhC (87 aa).

In terms of domain architecture, ACT spans V4 to Q76.

Belongs to the UPF0237 family.

The protein is UPF0237 protein YjhC (yjhC) of Lactococcus lactis subsp. lactis (strain IL1403) (Streptococcus lactis).